The sequence spans 259 residues: tRNA (guanine-N(7)-)-methyltransferase (259 aa).

Positions 1 to 74 (MGHHGQMHAQ…PAEDPDRPGP (74 aa)) are disordered. The S-adenosyl-L-methionine site is built by E91, E116, N143, and D166. The active site involves D166. Substrate-binding positions include K170, D202, and 238 to 241 (TKYE).

It belongs to the class I-like SAM-binding methyltransferase superfamily. TrmB family.

The catalysed reaction is guanosine(46) in tRNA + S-adenosyl-L-methionine = N(7)-methylguanosine(46) in tRNA + S-adenosyl-L-homocysteine. Its pathway is tRNA modification; N(7)-methylguanine-tRNA biosynthesis. Catalyzes the formation of N(7)-methylguanine at position 46 (m7G46) in tRNA. This is tRNA (guanine-N(7)-)-methyltransferase from Mycobacterium avium (strain 104).